A 487-amino-acid polypeptide reads, in one-letter code: (S)-N-methylcoclaurine 3'-hydroxylase isozyme 1 (487 aa).

Residues 4–24 (TVALIAVIISSILYLLFGGSG) form a helical membrane-spanning segment. Cys-429 provides a ligand contact to heme.

The protein belongs to the cytochrome P450 family. Requires heme as cofactor.

It is found in the endoplasmic reticulum membrane. The protein localises to the microsome membrane. The enzyme catalyses (S)-N-methylcoclaurine + reduced [NADPH--hemoprotein reductase] + O2 = (S)-3'-hydroxy-N-methylcoclaurine + oxidized [NADPH--hemoprotein reductase] + H2O + H(+). It participates in alkaloid biosynthesis; (S)-reticuline biosynthesis; (S)-reticuline from (S)-norcoclaurine: step 3/4. Functionally, 3'-hydroxylation of (S)-N-methylcoclaurine. This Eschscholzia californica (California poppy) protein is (S)-N-methylcoclaurine 3'-hydroxylase isozyme 1 (CYP80B1).